Here is a 345-residue protein sequence, read N- to C-terminus: Phenylalanine--tRNA ligase alpha subunit (345 aa).

E272 is a Mg(2+) binding site.

This sequence belongs to the class-II aminoacyl-tRNA synthetase family. Phe-tRNA synthetase alpha subunit type 1 subfamily. As to quaternary structure, tetramer of two alpha and two beta subunits. It depends on Mg(2+) as a cofactor.

It is found in the cytoplasm. The catalysed reaction is tRNA(Phe) + L-phenylalanine + ATP = L-phenylalanyl-tRNA(Phe) + AMP + diphosphate + H(+). The protein is Phenylalanine--tRNA ligase alpha subunit of Prochlorococcus marinus (strain MIT 9312).